The primary structure comprises 258 residues: MEKVKAKKHLGQHFLNDQQIAQDIVDGLTLHGSYKEVLEIGPGMGVLTQYLLKNNSYHTKVVDIDGESIEYLKKVFPQLKDDVIHGDFLKADLADWYPDKFAIIGNFPYNISTEILFKVLDYREQIPEVVGMFQKEVAERFAAKNGNKTYGITSVLLQAFYDIEYLFTVPEHVFTPPPKVKSGVIRLKRNNRTHLPCDEKEFFKVVKAGFNMRRKTLRNALKSINVQNISMDLPIFDKRAEQLSVQEFFDLTNMLSGK.

Positions 13, 15, 41, 63, 87, and 106 each coordinate S-adenosyl-L-methionine.

This sequence belongs to the class I-like SAM-binding methyltransferase superfamily. rRNA adenine N(6)-methyltransferase family. RsmA subfamily.

Its subcellular location is the cytoplasm. It catalyses the reaction adenosine(1518)/adenosine(1519) in 16S rRNA + 4 S-adenosyl-L-methionine = N(6)-dimethyladenosine(1518)/N(6)-dimethyladenosine(1519) in 16S rRNA + 4 S-adenosyl-L-homocysteine + 4 H(+). In terms of biological role, specifically dimethylates two adjacent adenosines (A1518 and A1519) in the loop of a conserved hairpin near the 3'-end of 16S rRNA in the 30S particle. May play a critical role in biogenesis of 30S subunits. The chain is Ribosomal RNA small subunit methyltransferase A from Cytophaga hutchinsonii (strain ATCC 33406 / DSM 1761 / CIP 103989 / NBRC 15051 / NCIMB 9469 / D465).